The following is a 227-amino-acid chain: Ubiquitin domain-containing protein 1 (227 aa).

Residues 1–36 form a disordered region; that stretch reads MGNCVGRQRRERPTAPGHPRKRAGRNEPLKKERLKW. Residues 24-36 are compositionally biased toward basic and acidic residues; sequence GRNEPLKKERLKW. The 76-residue stretch at 149–224 folds into the Ubiquitin-like domain; the sequence is FPLKVRLSTG…IQVIINQPPP (76 aa).

As to quaternary structure, interacts with UBTD1.

Its function is as follows. May be involved in the regulation of cellular senescence through a positive feedback loop with TP53. Is a TP53 downstream target gene that increases the stability of TP53 protein by promoting the ubiquitination and degradation of MDM2. This chain is Ubiquitin domain-containing protein 1 (UBTD1), found in Bos taurus (Bovine).